The sequence spans 839 residues: Toll-like receptor 4 (839 aa).

A signal peptide spans 1–23; that stretch reads MMSASRLAGTLIPAMAFLSCVRP. The Extracellular segment spans residues 24–631; it reads ESWEPCVEVV…SLNITCQMNK (608 aa). Cysteines 29 and 40 form a disulfide. The N-linked (GlcNAc...) asparagine glycan is linked to Asn35. 5 LRR repeats span residues 55 to 76, 79 to 100, 103 to 124, 127 to 148, and 151 to 172; these read STKN…SFFS, ELQV…AYQS, HLST…AFSG, SLQK…PIGH, and TLKE…EYFS. A glycan (N-linked (GlcNAc...) asparagine) is linked at Asn173. LRR repeat units follow at residues 176–199, 205–225, and 227–247; these read NLEH…RVLH, NLSL…AFKE, and RLHK…KTCI. An N-linked (GlcNAc...) asparagine glycan is attached at Asn205. An intrachain disulfide couples Cys281 to Cys306. Asn282 and Asn309 each carry an N-linked (GlcNAc...) asparagine glycan. LRR repeat units follow at residues 331–351, 352–373, 374–394, 400–422, 423–444, 448–456, 472–495, 497–518, 521–542, and 545–565; these read GWQH…LKLK, SLKR…VDLP, SLEF…CSQS, SLKY…LGLE, QLEH…SVFL, NLIYLDISH, SLEV…FTEL, NLTF…AFNS, SLQV…PYKC, and SLQV…QELQ. Cys390 and Cys391 form a disulfide bridge. Residues Asn497 and Asn526 are each glycosylated (N-linked (GlcNAc...) asparagine). A glycan (N-linked (GlcNAc...) asparagine) is linked at Asn575. The LRRCT domain maps to 579 to 629; that stretch reads NDFACTCEHQSFLQWIKDQRQLLVEVERMECATPSDKQGMPVLSLNITCQM. 2 disulfides stabilise this stretch: Cys583–Cys609 and Cys585–Cys627. Residues Asn624 and Asn630 are each glycosylated (N-linked (GlcNAc...) asparagine). Residues 632–652 form a helical membrane-spanning segment; it reads TIIGVSVLSVLVVSVVAVLVY. Residues 653-839 lie on the Cytoplasmic side of the membrane; the sequence is KFYFHLMLLA…GCNWQEATSI (187 aa). The 144-residue stretch at 672-815 folds into the TIR domain; the sequence is NIYDAFVIYS…IFWRRLRKAL (144 aa).

It belongs to the Toll-like receptor family. Belongs to the lipopolysaccharide (LPS) receptor, a multi-protein complex containing at least CD14, LY96 and TLR4. Binding to bacterial LPS leads to homodimerization. Interacts with LY96 via the extracellular domain. Interacts with MYD88. Interacts (via TIR domains) with TIRAP. Interacts with TICAM2. Interacts with NOX4. Interacts with CNPY3. Interacts with HSP90B1. The interaction with both CNPY3 and HSP90B1 is required for proper folding in the endoplasmic reticulum. Interacts with MAP3K21; this interaction leads to negative regulation of TLR4 signaling. Interacts with CD36, following CD36 stimulation by oxLDL or amyloid-beta 42, and forms a heterodimer with TLR6. The trimeric complex is internalized and triggers inflammatory response. LYN kinase activity facilitates TLR4-TLR6 heterodimerization and signal initiation. Interacts with TICAM1 in response to LPS in a WDFY1-dependent manner. Interacts with WDFY1 in response to LPS. Interacts with SMPDL3B. Interacts with CEACAM1; upon lipopolysaccharide stimulation, forms a complex including TLR4 and the phosphorylated form of SYK and CEACAM1, which in turn, recruits PTPN6 that dephosphorylates SYK, reducing the production of reactive oxygen species (ROS) and lysosome disruption, which in turn, reduces the activity of the inflammasome. Interacts with RFTN1; the interaction occurs in response to lipopolysaccharide stimulation. Interacts with SCIMP; the interaction occurs in response to lipopolysaccharide stimulation and is enhanced by phosphorylation of SCIMP by LYN. This interaction facilitates the phosphorylation of TLR4 by LYN which elicits a selective cytokine response in macrophages. Interacts with TRAF3IP3. Interacts with TREM1; this interaction enhances TLR4-mediated inflammatory response. Interacts with ZG16B/PAUF. Interacts with CD82; this interaction inhibits TLR4-mediated signaling pathway. Interacts with neutrophil recruitment protein from Aedes aegypti saliva; the interaction probably promotes activation of canonical NF-kappa-B signaling in skin-resident macrophages and subsequent expression of neutrophil chemoattractants. In terms of assembly, (Microbial infection) In case of infection, interacts with uropathogenic E.coli protein TcpC. As to quaternary structure, (Microbial infection) In case of infection, interacts with B.melitensis protein TcpB; TcpB abolishes the TLR4-TIRAP interaction in vitro. (Microbial infection) Interacts with ebolavirus protein GP; this interaction leads to the production of proinflammatory cytokines and suppressor of cytokine signaling 1/SOCS1. N-Glycosylation of Asn-526 and Asn-575 by STT3A-containing OST-A complex is necessary for the expression of TLR4 on the cell surface and the LPS-response. Likewise, mutants lacking two or more of the other N-glycosylation sites were deficient in interaction with LPS. In terms of processing, phosphorylated on tyrosine residues by LYN after binding lipopolysaccharide. Post-translationally, ubiquitinated by RNF128 via 'Lys-28'-linked polyubiquitin chains, leading to proteasomal degradation. Highly expressed in placenta, spleen and peripheral blood leukocytes. Detected in monocytes, macrophages, dendritic cells and several types of T-cells. Expressed in pancreatic cancer cells but not in normal pancreatic cells (at protein level).

The protein localises to the cell membrane. It is found in the early endosome. It localises to the cell projection. Its subcellular location is the ruffle. Transmembrane receptor that functions as a pattern recognition receptor recognizing pathogen- and damage-associated molecular patterns (PAMPs and DAMPs) to induce innate immune responses via downstream signaling pathways. At the plasma membrane, cooperates with LY96 to mediate the innate immune response to bacterial lipopolysaccharide (LPS). Also involved in LPS-independent inflammatory responses triggered by free fatty acids, such as palmitate, and Ni(2+). Mechanistically, acts via MYD88, TIRAP and TRAF6, leading to NF-kappa-B activation, cytokine secretion and the inflammatory response. Alternatively, CD14-mediated TLR4 internalization via endocytosis is associated with the initiation of a MYD88-independent signaling via the TICAM1-TBK1-IRF3 axis leading to type I interferon production. In addition to the secretion of proinflammatory cytokines, initiates the activation of NLRP3 inflammasome and formation of a positive feedback loop between autophagy and NF-kappa-B signaling cascade. In complex with TLR6, promotes inflammation in monocytes/macrophages by associating with TLR6 and the receptor CD86. Upon ligand binding, such as oxLDL or amyloid-beta 42, the TLR4:TLR6 complex is internalized and triggers inflammatory response, leading to NF-kappa-B-dependent production of CXCL1, CXCL2 and CCL9 cytokines, via MYD88 signaling pathway, and CCL5 cytokine, via TICAM1 signaling pathway. In myeloid dendritic cells, vesicular stomatitis virus glycoprotein G but not LPS promotes the activation of IRF7, leading to type I IFN production in a CD14-dependent manner. Required for the migration-promoting effects of ZG16B/PAUF on pancreatic cancer cells. The protein is Toll-like receptor 4 (TLR4) of Homo sapiens (Human).